A 237-amino-acid chain; its full sequence is Class B acid phosphatase (237 aa).

A signal peptide spans 1–23 (MRKVTLTLSAIALALSLNGAAMA). The active-site Nucleophile is aspartate 69. Residues aspartate 69 and aspartate 71 each coordinate Mg(2+). Aspartate 71 serves as the catalytic Proton donor. Residues 137 to 138 (TG) and lysine 177 contribute to the substrate site. Mg(2+) is bound at residue aspartate 192.

Belongs to the class B bacterial acid phosphatase family. Homotetramer. Mg(2+) is required as a cofactor.

The protein localises to the periplasm. The enzyme catalyses a phosphate monoester + H2O = an alcohol + phosphate. Dephosphorylates several organic phosphate monoesters. Also has a phosphotransferase activity catalyzing the transfer of low-energy phosphate groups from organic phosphate monoesters to free hydroxyl groups of various organic compounds. The sequence is that of Class B acid phosphatase from Proteus mirabilis (strain HI4320).